Consider the following 1257-residue polypeptide: RAF-like serine/threonine-protein kinase 24 (1257 aa).

The segment at 1 to 21 (MDQAKGYEHVRYTAPDPRDEG) is disordered. The PB1 domain occupies 191 to 277 (PRDQKLRYVG…EKPRMFLFSS (87 aa)). 2 stretches are compositionally biased toward basic and acidic residues: residues 457-480 (VQDP…KVND) and 493-502 (KEPKMRRESS). Disordered stretches follow at residues 457–629 (VQDP…RTSQ) and 761–789 (SQSE…VPQG). Residue Ser-474 is modified to Phosphoserine. Over residues 533–548 (TQTSSSTPDPSSSTLS) the composition is skewed to low complexity. Residues 550–576 (KSLRKSEDHVENNLSAKEPKMRKEHST) show a composition bias toward basic and acidic residues. Phosphoserine is present on Ser-555. The span at 583-593 (SVSSVSSDSMV) shows a compositional bias: low complexity. The segment covering 769 to 782 (ETNTPEHVSQTETS) has biased composition (polar residues). At Ser-777 the chain carries Phosphoserine. The 266-residue stretch at 974–1239 (LEELKELGSG…PEIARRLRTM (266 aa)) folds into the Protein kinase domain. ATP is bound by residues 980-988 (LGSGTFGTV) and Lys-1001. The residue at position 1013 (Ser-1013) is a Phosphoserine. Asp-1102 acts as the Proton acceptor in catalysis.

Belongs to the protein kinase superfamily. Ser/Thr protein kinase family. In terms of processing, hyperphosphorylated in response to auxin in an ABP1- and TMK1-dependent manner.

Its subcellular location is the cytoplasm. It carries out the reaction L-seryl-[protein] + ATP = O-phospho-L-seryl-[protein] + ADP + H(+). The catalysed reaction is L-threonyl-[protein] + ATP = O-phospho-L-threonyl-[protein] + ADP + H(+). Its activity is regulated as follows. Activated by auxin via rapid phosphorylation downstream of ABP1 and TMK1 signaling. RAF-like protein kinase acting, together with RAF20, as a central mediator of a fast response pathway to auxin involving proteins phosphorylation, and leading to rapid cellular responses including membrane depolarization and cytoplasmic streaming. Required for general growth and developmental process. The chain is RAF-like serine/threonine-protein kinase 24 from Arabidopsis thaliana (Mouse-ear cress).